A 364-amino-acid chain; its full sequence is Chorismate synthase (364 aa).

Arg-48 serves as a coordination point for NADP(+). FMN is bound by residues 125–127 (RSS), 237–238 (NA), Gly-277, 292–296 (KPTSS), and Arg-318.

The protein belongs to the chorismate synthase family. In terms of assembly, homotetramer. Requires FMNH2 as cofactor.

The enzyme catalyses 5-O-(1-carboxyvinyl)-3-phosphoshikimate = chorismate + phosphate. Its pathway is metabolic intermediate biosynthesis; chorismate biosynthesis; chorismate from D-erythrose 4-phosphate and phosphoenolpyruvate: step 7/7. Functionally, catalyzes the anti-1,4-elimination of the C-3 phosphate and the C-6 proR hydrogen from 5-enolpyruvylshikimate-3-phosphate (EPSP) to yield chorismate, which is the branch point compound that serves as the starting substrate for the three terminal pathways of aromatic amino acid biosynthesis. This reaction introduces a second double bond into the aromatic ring system. The protein is Chorismate synthase of Albidiferax ferrireducens (strain ATCC BAA-621 / DSM 15236 / T118) (Rhodoferax ferrireducens).